The chain runs to 516 residues: Glycerol-3-phosphate dehydrogenase 1 (516 aa).

Residue 28–56 (DVIVIGGGITGVGIALDAATRGLTVALVE) coordinates FAD.

Belongs to the FAD-dependent glycerol-3-phosphate dehydrogenase family. FAD is required as a cofactor.

It is found in the cytoplasm. It catalyses the reaction a quinone + sn-glycerol 3-phosphate = dihydroxyacetone phosphate + a quinol. The polypeptide is Glycerol-3-phosphate dehydrogenase 1 (glpD1) (Mycobacterium bovis (strain ATCC BAA-935 / AF2122/97)).